Reading from the N-terminus, the 172-residue chain is Small ribosomal subunit protein bS16 (172 aa).

The interval 125 to 172 (KKRKAKEEAEAKAAAEKAAEEAAAAEAAKAEEEAAKAEEADSAEESAE) is disordered. 2 stretches are compositionally biased toward basic and acidic residues: residues 129–144 (AKEEAEAKAAAEKAAE) and 152–163 (AKAEEEAAKAEE).

The protein belongs to the bacterial ribosomal protein bS16 family.

The sequence is that of Small ribosomal subunit protein bS16 from Corynebacterium aurimucosum (strain ATCC 700975 / DSM 44827 / CIP 107346 / CN-1) (Corynebacterium nigricans).